The sequence spans 195 residues: Nucleoside triphosphate pyrophosphatase (195 aa).

Aspartate 70 (proton acceptor) is an active-site residue.

It belongs to the Maf family. The cofactor is a divalent metal cation.

Its subcellular location is the cytoplasm. The enzyme catalyses a ribonucleoside 5'-triphosphate + H2O = a ribonucleoside 5'-phosphate + diphosphate + H(+). It carries out the reaction a 2'-deoxyribonucleoside 5'-triphosphate + H2O = a 2'-deoxyribonucleoside 5'-phosphate + diphosphate + H(+). Its function is as follows. Nucleoside triphosphate pyrophosphatase. May have a dual role in cell division arrest and in preventing the incorporation of modified nucleotides into cellular nucleic acids. This is Nucleoside triphosphate pyrophosphatase from Microcystis aeruginosa (strain NIES-843 / IAM M-2473).